Consider the following 704-residue polypeptide: Polyribonucleotide nucleotidyltransferase (704 aa).

Mg(2+) is bound by residues aspartate 485 and aspartate 491. Positions 552–611 (PKILTMTINPDKIRDVIGPSGKMINKIIEDTGVKIDIEQDGTIYISSADTNMNNKAREII) constitute a KH domain. The S1 motif domain occupies 621-689 (GQMYLGTVKR…NQGRVNLSRK (69 aa)).

This sequence belongs to the polyribonucleotide nucleotidyltransferase family. The cofactor is Mg(2+).

Its subcellular location is the cytoplasm. The catalysed reaction is RNA(n+1) + phosphate = RNA(n) + a ribonucleoside 5'-diphosphate. Involved in mRNA degradation. Catalyzes the phosphorolysis of single-stranded polyribonucleotides processively in the 3'- to 5'-direction. In Halalkalibacterium halodurans (strain ATCC BAA-125 / DSM 18197 / FERM 7344 / JCM 9153 / C-125) (Bacillus halodurans), this protein is Polyribonucleotide nucleotidyltransferase.